We begin with the raw amino-acid sequence, 146 residues long: Putative calcium-binding protein CML19 (146 aa).

EF-hand domains lie at 3-38, 40-75, 79-114, and 115-146; these read AATA…ALGE, MSAE…LEMG, ERCR…LGSH, and QGIE…MMDA. Ca(2+) contacts are provided by Asp-16, Asp-18, Asp-20, Lys-22, Glu-27, Asp-53, Asp-55, Asp-57, and Glu-64. Asp-128, Asp-130, Asp-132, and Glu-139 together coordinate Ca(2+).

Potential calcium sensor. The sequence is that of Putative calcium-binding protein CML19 (CML19) from Oryza sativa subsp. japonica (Rice).